Reading from the N-terminus, the 88-residue chain is LYR motif-containing protein 2 (88 aa).

The transit peptide at 1-19 (MAASRLPPATLTLKQFVRR) directs the protein to the mitochondrion.

The protein belongs to the complex I LYR family.

It localises to the mitochondrion. Its function is as follows. Involved in efficient integration of the N-module into mitochondrial respiratory chain complex I. The polypeptide is LYR motif-containing protein 2 (LYRM2) (Homo sapiens (Human)).